Here is a 320-residue protein sequence, read N- to C-terminus: Methionyl-tRNA formyltransferase (320 aa).

112-115 serves as a coordination point for (6S)-5,6,7,8-tetrahydrofolate; that stretch reads SILP.

Belongs to the Fmt family.

The enzyme catalyses L-methionyl-tRNA(fMet) + (6R)-10-formyltetrahydrofolate = N-formyl-L-methionyl-tRNA(fMet) + (6S)-5,6,7,8-tetrahydrofolate + H(+). Its function is as follows. Attaches a formyl group to the free amino group of methionyl-tRNA(fMet). The formyl group appears to play a dual role in the initiator identity of N-formylmethionyl-tRNA by promoting its recognition by IF2 and preventing the misappropriation of this tRNA by the elongation apparatus. The polypeptide is Methionyl-tRNA formyltransferase (Shewanella woodyi (strain ATCC 51908 / MS32)).